We begin with the raw amino-acid sequence, 91 residues long: Cell division topological specificity factor (91 aa).

The protein belongs to the MinE family.

Prevents the cell division inhibition by proteins MinC and MinD at internal division sites while permitting inhibition at polar sites. This ensures cell division at the proper site by restricting the formation of a division septum at the midpoint of the long axis of the cell. The chain is Cell division topological specificity factor from Lachnospira eligens (strain ATCC 27750 / DSM 3376 / VPI C15-48 / C15-B4) (Eubacterium eligens).